The sequence spans 157 residues: Beta-defensin 125 (157 aa).

An N-terminal signal peptide occupies residues 1-20 (MNILMLTFIICGLLTQVTKG). Intrachain disulfides connect Cys27–Cys55, Cys35–Cys49, and Cys39–Cys56. The tract at residues 109 to 157 (GETMTPETNTPETTVPPSETTTPETTMPPSETATSETMPPPSQTALTHN) is disordered. Positions 110–145 (ETMTPETNTPETTVPPSETTTPETTMPPSETATSET) are enriched in low complexity.

Belongs to the beta-defensin family.

The protein localises to the secreted. Has antibacterial activity. This Gorilla gorilla gorilla (Western lowland gorilla) protein is Beta-defensin 125 (DEFB125).